The sequence spans 651 residues: DNA mismatch repair protein MutL (651 aa).

The tract at residues 383–405 (TAAEEPTPAPTSPDLEIGDLDDQ) is disordered.

The protein belongs to the DNA mismatch repair MutL/HexB family.

In terms of biological role, this protein is involved in the repair of mismatches in DNA. It is required for dam-dependent methyl-directed DNA mismatch repair. May act as a 'molecular matchmaker', a protein that promotes the formation of a stable complex between two or more DNA-binding proteins in an ATP-dependent manner without itself being part of a final effector complex. This is DNA mismatch repair protein MutL from Lacticaseibacillus casei (strain BL23) (Lactobacillus casei).